A 268-amino-acid chain; its full sequence is Interleukin-1 alpha (268 aa).

Positions 1 to 112 (MAKVPDLFED…NTEEEIIKPR (112 aa)) are excised as a propeptide. Residue Lys-82 is modified to N6-acetyllysine. Residues 82 to 86 (KKRRL) form a nuclear localization signal (NLS) region. The residue at position 87 (Ser-87) is a Phosphoserine. Residues Asn-102 and Asn-141 are each glycosylated (N-linked (GlcNAc...) asparagine).

This sequence belongs to the IL-1 family. Monomer. Interacts with TMED10; the interaction mediates the translocation from the cytoplasm into the ERGIC (endoplasmic reticulum-Golgi intermediate compartment) and thereby secretion. Interacts with IL1R1. Interacts with S100A13; this interaction is the first step in the export of IL1A, followed by direct translocation of this complex across the plasma membrane. In terms of processing, acetylated within its nuclear localization sequence, which impacts subcellular localization. Post-translationally, proteolytic processed by CAPN1 in a calcium-dependent manner. Cleavage from 31 kDa precursor to 18 kDa biologically active molecules. Phosphorylated. Phosphorylation greatly enhances susceptibility to digestion and promotes the conversion of pre-IL1A alpha to the biologically active IL1A.

The protein resides in the nucleus. Its subcellular location is the cytoplasm. It is found in the secreted. In terms of biological role, cytokine constitutively present intracellularly in nearly all resting non-hematopoietic cells that plays an important role in inflammation and bridges the innate and adaptive immune systems. After binding to its receptor IL1R1 together with its accessory protein IL1RAP, forms the high affinity interleukin-1 receptor complex. Signaling involves the recruitment of adapter molecules such as MYD88, IRAK1 or IRAK4. In turn, mediates the activation of NF-kappa-B and the three MAPK pathways p38, p42/p44 and JNK pathways. Within the cell, acts as an alarmin and cell death results in its liberation in the extracellular space after disruption of the cell membrane to induce inflammation and alert the host to injury or damage. In addition to its role as a danger signal, which occurs when the cytokine is passively released by cell necrosis, directly senses DNA damage and acts as signal for genotoxic stress without loss of cell integrity. The protein is Interleukin-1 alpha (IL1A) of Bubalus carabanensis (Swamp type water buffalo).